Reading from the N-terminus, the 383-residue chain is MAEPRPLTIALVAGETSGDILGAGLIRALKARIPDARFVGVAGPLMQAEGCEAWYEMEELAVMGIVEVLGRLRRLLHIRADLTRRFGELRPDVFVGIDAPDFNITLEGNLKKQGIKTIHYVSPSVWAWRQKRVFKIGRATDLVLAFLPFEKAFYDKFNVPCRFIGHTMADAMPLDPDKGAARDRLGIPHNVRCLALLPGSRGAEVEMLSADFLKTAQLLRVTYPDLQVVVPLVNAKRREQFERIKAETAPDMIVHMLDGQARDAMIASDAALLASGTAALECMLAKCPMVVGYRMKPFTFWLAKRLVKTDYVSLPNLLAGRELVKELLQDECEPQVLAAALQPLLADGKTSHEMHETFRALHQQIRCNADEQAADAVLELAKQ.

This sequence belongs to the LpxB family.

The catalysed reaction is 2-N,3-O-bis[(3R)-3-hydroxytetradecanoyl]-alpha-D-glucosaminyl 1-phosphate + UDP-2-N,3-O-bis[(3R)-3-hydroxytetradecanoyl]-alpha-D-glucosamine = lipid A disaccharide (E. coli) + UDP + H(+). It catalyses the reaction a lipid X + a UDP-2-N,3-O-bis[(3R)-3-hydroxyacyl]-alpha-D-glucosamine = a lipid A disaccharide + UDP + H(+). It participates in glycolipid biosynthesis; lipid IV(A) biosynthesis; lipid IV(A) from (3R)-3-hydroxytetradecanoyl-[acyl-carrier-protein] and UDP-N-acetyl-alpha-D-glucosamine: step 5/6. In terms of biological role, condensation of UDP-2,3-diacylglucosamine and 2,3-diacylglucosamine-1-phosphate to form lipid A disaccharide, a precursor of lipid A, a phosphorylated glycolipid that anchors the lipopolysaccharide to the outer membrane of the cell. This is Lipid-A-disaccharide synthase from Klebsiella pneumoniae (strain 342).